Reading from the N-terminus, the 54-residue chain is UPF0391 membrane protein BAV1230 (54 aa).

A run of 2 helical transmembrane segments spans residues 5 to 25 (AAVF…GIAA) and 27 to 47 (AAGI…LSVL).

It belongs to the UPF0391 family.

The protein localises to the cell membrane. In Bordetella avium (strain 197N), this protein is UPF0391 membrane protein BAV1230.